We begin with the raw amino-acid sequence, 556 residues long: MSKLIRRVVTVLALTSMASCFASGGIEAAVAESLITKIVASAETKPAPVPMTAKKVRLVRRNKQPVEQKSRGAFCDKEFYPCEEGRCQPVEAQQESCYGRLYSVKVNDDCNVEICQSVPEYATVGSPYPIEILAIGKKDCVDVVITQQLPCEAEFVSSDPETTPTSDGKLVWKIDRLGAGDKCKITVWVKPLKEGCCFTAATVCACPELRSYTKCGQPAICIKQEGPDCACLRCPVCYKIEVVNTGSAIARNVTVDNPVPDGYSHASGQRVLSFNLGDMRPGDKKVFTVEFCPQRRGQITNVATVTYCGGHKCSANVTTVVNEPCVQVNISGADWSYVCKPVEYSISVSNPGDLVLHDVVIQDTLPSGVTVLEAPGGEICCNKVVWRIKEMCPGETLQFKLVVKAQVPGRFTNQVAVTSESNCGTCTSCAETTTHWKGLAATHMCVLDTNDPICVGENTVYRICVTNRGSAEDTNVSLILKFSKELQPIASSGPTKGTISGNTVVFDALPKLGSKESVEFSVTLKGIAPGDARGEAILSSDTLTSPVSDTENTHVY.

Positions 1 to 22 are cleaved as a signal peptide; the sequence is MSKLIRRVVTVLALTSMASCFA. The propeptide occupies 23 to 40; sequence SGGIEAAVAESLITKIVA.

As to quaternary structure, part of a disulfide cross-linked outer membrane complex (COMC) composed of the major outer membrane porin (MOMP), the small cysteine-rich protein (OmcA) and the large cysteine-rich periplasmic protein (OmcB).

The protein localises to the periplasm. Its function is as follows. In elementary bodies (EBs, the infectious stage, which is able to survive outside the host cell) provides the structural integrity of the outer envelope through disulfide cross-links with the small cysteine-rich protein and the major outer membrane porin. It has been described in publications as the Sarkosyl-insoluble COMC (Chlamydia outer membrane complex), and serves as the functional equivalent of peptidoglycan. This chain is Large cysteine-rich periplasmic protein OmcB (omcB), found in Chlamydia pneumoniae (Chlamydophila pneumoniae).